The following is a 435-amino-acid chain: Serine--tRNA ligase (435 aa).

242-244 contacts L-serine; it reads TAE. Residue 273 to 275 participates in ATP binding; that stretch reads RSE. Residue Glu296 coordinates L-serine. 360–363 contacts ATP; the sequence is EISS. Residue Ser396 participates in L-serine binding.

The protein belongs to the class-II aminoacyl-tRNA synthetase family. Type-1 seryl-tRNA synthetase subfamily. In terms of assembly, homodimer. The tRNA molecule binds across the dimer.

Its subcellular location is the cytoplasm. It carries out the reaction tRNA(Ser) + L-serine + ATP = L-seryl-tRNA(Ser) + AMP + diphosphate + H(+). The enzyme catalyses tRNA(Sec) + L-serine + ATP = L-seryl-tRNA(Sec) + AMP + diphosphate + H(+). It functions in the pathway aminoacyl-tRNA biosynthesis; selenocysteinyl-tRNA(Sec) biosynthesis; L-seryl-tRNA(Sec) from L-serine and tRNA(Sec): step 1/1. Its function is as follows. Catalyzes the attachment of serine to tRNA(Ser). Is also able to aminoacylate tRNA(Sec) with serine, to form the misacylated tRNA L-seryl-tRNA(Sec), which will be further converted into selenocysteinyl-tRNA(Sec). This Vibrio atlanticus (strain LGP32) (Vibrio splendidus (strain Mel32)) protein is Serine--tRNA ligase.